The primary structure comprises 375 residues: Growth/differentiation factor 8 (375 aa).

The signal sequence occupies residues 1–23 (MQKLQLCVYIYLFMLIVAGPVDL). A propeptide spanning residues 24-266 (NENSEQKENV…VTDTPKRSRR (243 aa)) is cleaved from the precursor. N71 carries N-linked (GlcNAc...) asparagine glycosylation. 4 disulfides stabilise this stretch: C272–C282, C281–C340, C309–C372, and C313–C374.

This sequence belongs to the TGF-beta family. As to quaternary structure, homodimer; disulfide-linked. Interacts with WFIKKN2, leading to inhibit its activity. Interacts with FSTL3. Synthesized as large precursor molecule that undergoes proteolytic cleavage to generate an N-terminal propeptide and a disulfide linked C-terminal dimer, which is the biologically active molecule. The circulating form consists of a latent complex of the C-terminal dimer and other proteins, including its propeptide, which maintain the C-terminal dimer in a latent, inactive state. Ligand activation requires additional cleavage of the prodomain by a tolloid-like metalloproteinase.

Its subcellular location is the secreted. In terms of biological role, acts specifically as a negative regulator of skeletal muscle growth. The chain is Growth/differentiation factor 8 (MSTN) from Papio hamadryas (Hamadryas baboon).